The primary structure comprises 251 residues: 2,3-bisphosphoglycerate-dependent phosphoglycerate mutase (251 aa).

Substrate is bound by residues 11-18 (RHGESDWN), 24-25 (TG), arginine 63, 90-93 (ERHY), lysine 101, 117-118 (RR), and 184-185 (GN). The active-site Tele-phosphohistidine intermediate is histidine 12. Glutamate 90 serves as the catalytic Proton donor/acceptor.

It belongs to the phosphoglycerate mutase family. BPG-dependent PGAM subfamily.

The catalysed reaction is (2R)-2-phosphoglycerate = (2R)-3-phosphoglycerate. The protein operates within carbohydrate degradation; glycolysis; pyruvate from D-glyceraldehyde 3-phosphate: step 3/5. Catalyzes the interconversion of 2-phosphoglycerate and 3-phosphoglycerate. The protein is 2,3-bisphosphoglycerate-dependent phosphoglycerate mutase of Mycobacterium marinum (strain ATCC BAA-535 / M).